A 67-amino-acid chain; its full sequence is MMFRLTSVSCFLLVIACLNLFQVVLTRRCFPPGVYCTRHLPCCRGRCCSGWCRPRCFPRYGKRATFQ.

The signal sequence occupies residues 1 to 26 (MMFRLTSVSCFLLVIACLNLFQVVLT). 4 disulfide bridges follow: C29/C43, C36/C48, C42/C52, and C47/C56. Y60 carries the post-translational modification Tyrosine amide. A propeptide spanning residues 64 to 67 (ATFQ) is cleaved from the precursor.

It belongs to the conotoxin I2 superfamily. As to expression, expressed by the venom duct.

Its subcellular location is the secreted. In Conus capitaneus (Captain cone), this protein is Conotoxin Cp1.1.